A 242-amino-acid chain; its full sequence is Small ribosomal subunit protein uS3 (242 aa).

Positions 39 to 109 (IRQYVKATLA…QIRINVVEVT (71 aa)) constitute a KH type-2 domain. A disordered region spans residues 220 to 242 (KVNQPKRRQQKRRQQYDDRSNEG). Over residues 223-232 (QPKRRQQKRR) the composition is skewed to basic residues. Residues 233–242 (QQYDDRSNEG) show a composition bias toward basic and acidic residues.

It belongs to the universal ribosomal protein uS3 family. Part of the 30S ribosomal subunit. Forms a tight complex with proteins S10 and S14.

Binds the lower part of the 30S subunit head. Binds mRNA in the 70S ribosome, positioning it for translation. The polypeptide is Small ribosomal subunit protein uS3 (Trichodesmium erythraeum (strain IMS101)).